Consider the following 587-residue polypeptide: Sedolisin (587 aa).

Residues 1–32 (MKSSAAKQTVLCLNRYAVVALPLAIASFAAFG) form the signal peptide. Residues 33 to 215 (ASPASTLWAP…VGERSAAKTL (183 aa)) constitute a propeptide, removed in mature form. In terms of domain architecture, Peptidase S53 spans 219-583 (TAKGHNPTEF…AKLSAYIRSN (365 aa)). The disordered stretch occupies residues 276–295 (TIQTGSSNGDYSDDQQGQGE). Residues glutamate 295 and aspartate 299 each act as charge relay system in the active site. Cysteine 352 and cysteine 391 are oxidised to a cystine. Serine 502 functions as the Charge relay system in the catalytic mechanism. Positions 543, 544, 559, 561, and 563 each coordinate Ca(2+). A propeptide spans 586–587 (GH) (removed in mature form).

Requires Ca(2+) as cofactor. Autocatalytically processed.

It is found in the periplasm. It carries out the reaction Hydrolysis of the B chain of insulin at 13-Glu-|-Ala-14, 15-Leu-|-Tyr-16 and 25-Phe-|-Tyr-26 and angiotensin I at 4-Tyr-|-Ile-5. A good synthetic substrate is Lys-Pro-Ile-Glu-Phe-|-Phe(NO2)-Arg-Leu.. Inhibited by 1,2-epoxy-3-(p-nitrophenoxy)propane (EPNP), but not by carboxyl proteinase inhibitors, such as pepstatin, pepstatin Ac (S-PI) and diazoacetyl-DL-norleucine methyl ester (DAN). Inhibited by tyrostatin, pseudo-tyrostatin, AcIPF, AcIAF, chymostatin and pseudo-iodotyrostatin. Its function is as follows. Pepstatin-insensitive serine-carboxyl proteinase. In vitro can hydrolyze various synthetic peptides. Also shows activity on acid-denatured hemoglobin and on casein. This chain is Sedolisin (pcp), found in Pseudomonas sp. (strain 101) (Achromobacter parvulus T1).